The primary structure comprises 89 residues: Small ribosomal subunit protein bS20 (89 aa).

Residues 1 to 11 (MANIKSQIKRN) show a composition bias toward polar residues. Residues 1–22 (MANIKSQIKRNLTNEKRRLRNK) form a disordered region.

This sequence belongs to the bacterial ribosomal protein bS20 family.

Binds directly to 16S ribosomal RNA. The sequence is that of Small ribosomal subunit protein bS20 from Frankia casuarinae (strain DSM 45818 / CECT 9043 / HFP020203 / CcI3).